The chain runs to 330 residues: D-lactate dehydrogenase (330 aa).

NAD(+) contacts are provided by residues Arg156–Ile157, Asp176, Val206–Pro207, Ala233–Arg235, and Asp259. Arg235 is a catalytic residue. Residue Glu264 is part of the active site. Catalysis depends on His296, which acts as the Proton donor.

It belongs to the D-isomer specific 2-hydroxyacid dehydrogenase family.

It carries out the reaction (R)-lactate + NAD(+) = pyruvate + NADH + H(+). The protein is D-lactate dehydrogenase (ldhD) of Staphylococcus aureus (strain MRSA252).